The following is a 172-amino-acid chain: MSEEITNGAAAPVDAATGPAFTVEKIYVKDVSFESPNAPTIFNDQVQPELQLNLNQQVQRLGENAFEVVLAVTLTCQAGERTAYVAEVKQAGVFGLVGLDPQSIDVLLGTQCPNILFPYVRQLISDLIQAGGFPPFFLQPINFEGLYAETLRQRQEQGDAPSLADSEPAGNA.

This sequence belongs to the SecB family. In terms of assembly, homotetramer, a dimer of dimers. One homotetramer interacts with 1 SecA dimer.

The protein resides in the cytoplasm. Functionally, one of the proteins required for the normal export of preproteins out of the cell cytoplasm. It is a molecular chaperone that binds to a subset of precursor proteins, maintaining them in a translocation-competent state. It also specifically binds to its receptor SecA. This Stenotrophomonas maltophilia (strain K279a) protein is Protein-export protein SecB.